Here is a 294-residue protein sequence, read N- to C-terminus: 33 kDa chaperonin (294 aa).

2 cysteine pairs are disulfide-bonded: cysteine 238/cysteine 240 and cysteine 271/cysteine 274.

Belongs to the HSP33 family. Post-translationally, under oxidizing conditions two disulfide bonds are formed involving the reactive cysteines. Under reducing conditions zinc is bound to the reactive cysteines and the protein is inactive.

It localises to the cytoplasm. Redox regulated molecular chaperone. Protects both thermally unfolding and oxidatively damaged proteins from irreversible aggregation. Plays an important role in the bacterial defense system toward oxidative stress. The polypeptide is 33 kDa chaperonin (Staphylococcus haemolyticus (strain JCSC1435)).